The primary structure comprises 561 residues: Dihydroxy-acid dehydratase (561 aa).

Cys-50 serves as a coordination point for [2Fe-2S] cluster. Asp-82 lines the Mg(2+) pocket. Residue Cys-123 participates in [2Fe-2S] cluster binding. Mg(2+) contacts are provided by Asp-124 and Lys-125. Position 125 is an N6-carboxylysine (Lys-125). Cys-195 contacts [2Fe-2S] cluster. Glu-447 is a Mg(2+) binding site. Ser-473 (proton acceptor) is an active-site residue.

The protein belongs to the IlvD/Edd family. As to quaternary structure, homodimer. It depends on [2Fe-2S] cluster as a cofactor. Requires Mg(2+) as cofactor.

The catalysed reaction is (2R)-2,3-dihydroxy-3-methylbutanoate = 3-methyl-2-oxobutanoate + H2O. The enzyme catalyses (2R,3R)-2,3-dihydroxy-3-methylpentanoate = (S)-3-methyl-2-oxopentanoate + H2O. The protein operates within amino-acid biosynthesis; L-isoleucine biosynthesis; L-isoleucine from 2-oxobutanoate: step 3/4. Its pathway is amino-acid biosynthesis; L-valine biosynthesis; L-valine from pyruvate: step 3/4. Functions in the biosynthesis of branched-chain amino acids. Catalyzes the dehydration of (2R,3R)-2,3-dihydroxy-3-methylpentanoate (2,3-dihydroxy-3-methylvalerate) into 2-oxo-3-methylpentanoate (2-oxo-3-methylvalerate) and of (2R)-2,3-dihydroxy-3-methylbutanoate (2,3-dihydroxyisovalerate) into 2-oxo-3-methylbutanoate (2-oxoisovalerate), the penultimate precursor to L-isoleucine and L-valine, respectively. The protein is Dihydroxy-acid dehydratase of Crocosphaera subtropica (strain ATCC 51142 / BH68) (Cyanothece sp. (strain ATCC 51142)).